Reading from the N-terminus, the 414-residue chain is WD repeat-containing protein jip5 (414 aa).

WD repeat units lie at residues Pro-9 to Asp-48, Arg-73 to Lys-112, Ala-118 to Ser-159, Val-222 to Glu-263, and Asp-319 to Asp-356. The disordered stretch occupies residues Arg-39–Ile-65. The segment at Val-357 to Asp-414 is disordered. The span at Asp-369–Glu-383 shows a compositional bias: acidic residues. Residues Arg-394–Gly-403 are compositionally biased toward basic residues.

This sequence belongs to the WD repeat WDR55 family.

The protein localises to the nucleus. It is found in the nucleolus. This is WD repeat-containing protein jip5 (jip5) from Aspergillus clavatus (strain ATCC 1007 / CBS 513.65 / DSM 816 / NCTC 3887 / NRRL 1 / QM 1276 / 107).